The primary structure comprises 190 residues: Large ribosomal subunit protein eL15 (190 aa).

Belongs to the eukaryotic ribosomal protein eL15 family.

This chain is Large ribosomal subunit protein eL15 (rpl15e), found in Nanoarchaeum equitans (strain Kin4-M).